The following is a 288-amino-acid chain: Type II iodothyronine deiodinase (288 aa).

Over 1–5 (MPHVN) the chain is Lumenal. The chain crosses the membrane as a helical; Signal-anchor for type III membrane protein span at residues 6–26 (LLVVLLILPGVFSNCLFLALY). Topologically, residues 27–288 (DAVSFLRRAL…SFLESVKASR (262 aa)) are cytoplasmic. A disordered region spans residues 99–130 (SCAASSSSSHETPTPRTTAEAAATVTTSTTTT). Selenocysteine 160 is an active-site residue. Selenocysteine 160 is a non-standard amino acid (selenocysteine).

It belongs to the iodothyronine deiodinase family. In terms of assembly, predominantly monomer. Can form homodimers but homodimerization is not essential for enzyme activity. Expressed in intestine, liver, kidney and brain of immediately premetamorphic larvae, of larvae in all stages of metamorphosis and of parasitic feeding juveniles. In immediately premetamorphic larvae, levels are significantly higher in intestine and liver than in kidney and brain.

The protein localises to the endoplasmic reticulum membrane. The catalysed reaction is 3,3',5-triiodo-L-thyronine + iodide + A + H(+) = L-thyroxine + AH2. It carries out the reaction 3,3'-diiodo-L-thyronine + iodide + A + H(+) = 3,3',5'-triiodo-L-thyronine + AH2. It catalyses the reaction 3'-iodo-L-thyronine + iodide + A + H(+) = 3',5'-diiodo-L-thyronine + AH2. The enzyme catalyses 3,3'-diiodothyronamine + iodide + A + H(+) = 3,3',5'-triiodothyronamine + AH2. The catalysed reaction is 3'-iodothyronamine + iodide + A + H(+) = 3',5'-diiodothyronamine + AH2. Functionally, plays a crucial role in the metabolism of thyroid hormones (TH) and has specific roles in TH activation and inactivation by deiodination. Catalyzes the deiodination of L-thyroxine (T4) to 3,5,3'-triiodothyronine (T3), 3,3',5'-triiodothyronine (rT3) to 3,3'-diiodothyronine (3,3'-T2) and 3',5'-diiodothyronine (3',5'-T2) to 3'-monoiodothyronine (3'-T1) via outer-ring deiodination (ORD). Catalyzes the phenolic ring deiodinations of 3,3',5'-triiodothyronamine and 3',5'- diiodothyronamine. This Petromyzon marinus (Sea lamprey) protein is Type II iodothyronine deiodinase.